Reading from the N-terminus, the 294-residue chain is Transmembrane protein 178B (294 aa).

The first 23 residues, 1–23, serve as a signal peptide directing secretion; the sequence is MAAGRLLLYTGLSLALCALGMLA. 2 N-linked (GlcNAc...) asparagine glycosylation sites follow: N148 and N152. Transmembrane regions (helical) follow at residues 172–192, 206–226, and 252–272; these read AGFM…GVLG, LLFL…VAGI, and MFCA…CTLA.

Belongs to the TMEM178 family.

It localises to the membrane. The polypeptide is Transmembrane protein 178B (TMEM178B) (Homo sapiens (Human)).